We begin with the raw amino-acid sequence, 940 residues long: Isoleucine--tRNA ligase (940 aa).

Positions P58 to H68 match the 'HIGH' region motif. E564 is an L-isoleucyl-5'-AMP binding site. A 'KMSKS' region motif is present at residues K605 to S609. K608 is an ATP binding site. The Zn(2+) site is built by C903, C906, C923, and C926.

The protein belongs to the class-I aminoacyl-tRNA synthetase family. IleS type 1 subfamily. In terms of assembly, monomer. Requires Zn(2+) as cofactor.

It is found in the cytoplasm. It carries out the reaction tRNA(Ile) + L-isoleucine + ATP = L-isoleucyl-tRNA(Ile) + AMP + diphosphate. Its function is as follows. Catalyzes the attachment of isoleucine to tRNA(Ile). As IleRS can inadvertently accommodate and process structurally similar amino acids such as valine, to avoid such errors it has two additional distinct tRNA(Ile)-dependent editing activities. One activity is designated as 'pretransfer' editing and involves the hydrolysis of activated Val-AMP. The other activity is designated 'posttransfer' editing and involves deacylation of mischarged Val-tRNA(Ile). This is Isoleucine--tRNA ligase from Shewanella sp. (strain MR-4).